A 160-amino-acid chain; its full sequence is Small ribosomal subunit protein uS9 (160 aa).

This sequence belongs to the universal ribosomal protein uS9 family.

The chain is Small ribosomal subunit protein uS9 from Rhodopseudomonas palustris (strain ATCC BAA-98 / CGA009).